Reading from the N-terminus, the 108-residue chain is Nucleoid-associated protein BARBAKC583_1239 (108 aa).

Belongs to the YbaB/EbfC family. As to quaternary structure, homodimer.

The protein resides in the cytoplasm. It localises to the nucleoid. Binds to DNA and alters its conformation. May be involved in regulation of gene expression, nucleoid organization and DNA protection. This is Nucleoid-associated protein BARBAKC583_1239 from Bartonella bacilliformis (strain ATCC 35685 / KC583 / Herrer 020/F12,63).